Here is a 516-residue protein sequence, read N- to C-terminus: 2,3-bisphosphoglycerate-independent phosphoglycerate mutase (516 aa).

The Mn(2+) site is built by Asp-13 and Ser-63. The active-site Phosphoserine intermediate is the Ser-63. Residues His-124, 154–155, Arg-186, Arg-192, 262–265, and Lys-337 contribute to the substrate site; these read RD and RPDR. 5 residues coordinate Mn(2+): Asp-404, His-408, Asp-445, His-446, and His-464.

The protein belongs to the BPG-independent phosphoglycerate mutase family. As to quaternary structure, monomer. The cofactor is Mn(2+).

It carries out the reaction (2R)-2-phosphoglycerate = (2R)-3-phosphoglycerate. It functions in the pathway carbohydrate degradation; glycolysis; pyruvate from D-glyceraldehyde 3-phosphate: step 3/5. In terms of biological role, catalyzes the interconversion of 2-phosphoglycerate and 3-phosphoglycerate. This is 2,3-bisphosphoglycerate-independent phosphoglycerate mutase from Cellvibrio japonicus (strain Ueda107) (Pseudomonas fluorescens subsp. cellulosa).